A 972-amino-acid chain; its full sequence is Hemoglobin and hemoglobin-haptoglobin-binding protein (972 aa).

An N-terminal signal peptide occupies residues 1–22 (MKANKLSAITLCILGYAHTVYA). Residues 32 to 39 (ETIVVSSE) carry the TonB box motif. The region spanning 38 to 167 (SEDDSVHNKN…LGGTVSFESK (130 aa)) is the TBDR plug domain. Residues 175–972 (DKNYHFGYKT…NFRVNAEITF (798 aa)) form the TBDR beta-barrel domain. A TonB C-terminal box motif is present at residues 955 to 972 (KRFNAPGRNFRVNAEITF).

The protein belongs to the TonB-dependent receptor family. Hemoglobin/haptoglobin binding protein subfamily.

It localises to the cell outer membrane. Functionally, acts as a receptor for hemoglobin or the hemoglobin/haptoglobin complex of the host and is required for heme uptake. May be involved in virulence. This chain is Hemoglobin and hemoglobin-haptoglobin-binding protein, found in Haemophilus ducreyi (strain 35000HP / ATCC 700724).